The sequence spans 305 residues: Oxygen-dependent coproporphyrinogen-III oxidase (305 aa).

Ser-98 provides a ligand contact to substrate. The a divalent metal cation site is built by His-102 and His-112. The Proton donor role is filled by His-112. Position 114 to 116 (114 to 116) interacts with substrate; sequence NVR. A divalent metal cation is bound by residues His-151 and His-181. The interval 246 to 281 is important for dimerization; that stretch reads YVEFNLVYDRGTLFGLQSGGRTESILMSMPPLARWE. 264-266 contributes to the substrate binding site; that stretch reads GGR.

Belongs to the aerobic coproporphyrinogen-III oxidase family. Homodimer. The cofactor is a divalent metal cation.

It is found in the cytoplasm. It carries out the reaction coproporphyrinogen III + O2 + 2 H(+) = protoporphyrinogen IX + 2 CO2 + 2 H2O. It functions in the pathway porphyrin-containing compound metabolism; protoporphyrin-IX biosynthesis; protoporphyrinogen-IX from coproporphyrinogen-III (O2 route): step 1/1. Involved in the heme biosynthesis. Catalyzes the aerobic oxidative decarboxylation of propionate groups of rings A and B of coproporphyrinogen-III to yield the vinyl groups in protoporphyrinogen-IX. The sequence is that of Oxygen-dependent coproporphyrinogen-III oxidase from Vibrio atlanticus (strain LGP32) (Vibrio splendidus (strain Mel32)).